The primary structure comprises 318 residues: Decaprenyl-phosphate phosphoribosyltransferase (318 aa).

The next 2 helical transmembrane spans lie at 33–53 (WIKN…GIEY) and 59–79 (AAKV…IYLI). 5-phospho-alpha-D-ribose 1-diphosphate-binding residues include Lys35 and Tyr77. Residues Asn80 and Asp84 each contribute to the Mg(2+) site. Lys94 contributes to the 5-phospho-alpha-D-ribose 1-diphosphate binding site. The next 2 helical transmembrane spans lie at 99-119 (IAAG…LAVA) and 121-141 (LVIS…YIAV). 5-phospho-alpha-D-ribose 1-diphosphate-binding residues include Lys150 and Arg167. 2 consecutive transmembrane segments (helical) span residues 153–173 (AVLD…AGGV) and 177–197 (IPLS…MAAG). Residue Lys198 coordinates trans,octa-cis-decaprenyl phosphate. A run of 3 helical transmembrane segments spans residues 225 to 245 (LRFV…LWAF), 262 to 282 (SWYA…AVDI), and 298 to 318 (RVLQ…IYFS).

Belongs to the UbiA prenyltransferase family. DPPR synthase subfamily. Mg(2+) serves as cofactor.

The protein localises to the cell inner membrane. The catalysed reaction is trans,octa-cis-decaprenyl phosphate + 5-phospho-alpha-D-ribose 1-diphosphate + H(+) = trans,octa-cis-decaprenylphospho-beta-D-ribofuranose 5-phosphate + diphosphate. It functions in the pathway cell wall biogenesis; cell wall polysaccharide biosynthesis. Involved in the biosynthesis of decaprenylphosphoryl arabinose (DPA) a precursor for arabinan synthesis in mycobacterial cell wall biosynthesis. Catalyzes the transfer of a 5-phosphoribosyl residue from phosphoribose diphosphate (PRPP) to decaprenyl phosphate (DP) to form decaprenylphosphoryl-5-phosphoribose (DPPR). In Mycolicibacterium smegmatis (strain ATCC 700084 / mc(2)155) (Mycobacterium smegmatis), this protein is Decaprenyl-phosphate phosphoribosyltransferase.